A 236-amino-acid chain; its full sequence is 2-C-methyl-D-erythritol 4-phosphate cytidylyltransferase (236 aa).

This sequence belongs to the IspD/TarI cytidylyltransferase family. IspD subfamily. In terms of assembly, homodimer.

The catalysed reaction is 2-C-methyl-D-erythritol 4-phosphate + CTP + H(+) = 4-CDP-2-C-methyl-D-erythritol + diphosphate. It functions in the pathway isoprenoid biosynthesis; isopentenyl diphosphate biosynthesis via DXP pathway; isopentenyl diphosphate from 1-deoxy-D-xylulose 5-phosphate: step 2/6. Its function is as follows. Catalyzes the formation of 4-diphosphocytidyl-2-C-methyl-D-erythritol from CTP and 2-C-methyl-D-erythritol 4-phosphate (MEP). The polypeptide is 2-C-methyl-D-erythritol 4-phosphate cytidylyltransferase (Escherichia coli O7:K1 (strain IAI39 / ExPEC)).